We begin with the raw amino-acid sequence, 466 residues long: Phosphomethylpyrimidine synthase (466 aa).

Substrate-binding positions include asparagine 80, methionine 109, tyrosine 139, histidine 175, serine 195–glycine 197, aspartate 236–arginine 239, and glutamate 275. Histidine 279 is a binding site for Zn(2+). Tyrosine 302 serves as a coordination point for substrate. Histidine 343 serves as a coordination point for Zn(2+). 3 residues coordinate [4Fe-4S] cluster: cysteine 423, cysteine 426, and cysteine 431.

It belongs to the ThiC family. It depends on [4Fe-4S] cluster as a cofactor.

The enzyme catalyses 5-amino-1-(5-phospho-beta-D-ribosyl)imidazole + S-adenosyl-L-methionine = 4-amino-2-methyl-5-(phosphooxymethyl)pyrimidine + CO + 5'-deoxyadenosine + formate + L-methionine + 3 H(+). It participates in cofactor biosynthesis; thiamine diphosphate biosynthesis. Functionally, catalyzes the synthesis of the hydroxymethylpyrimidine phosphate (HMP-P) moiety of thiamine from aminoimidazole ribotide (AIR) in a radical S-adenosyl-L-methionine (SAM)-dependent reaction. In Synechococcus sp. (strain RCC307), this protein is Phosphomethylpyrimidine synthase.